We begin with the raw amino-acid sequence, 648 residues long: MARYAAGAVDCPGSPKSVRIVVVGDKGTGKSSLIVAAATDSFPPNVPPVLPDYKLPIEFFPDGIPVTIVDTSSRPEDRDIVAEELKRADAVVLTYACDRPETLERLSEYWLPELRRLEVKIPIIVAGCKLDFRDDNNQVSLEQVMSPIMQQFREIETCIECSALKQLQAQEVFYYAQKTVLHPTGPLFDQDSQALKPRCVRALKRIFILCDHDRDGALSEAELNDFQVKCFHAPLQPSEIEGVKRVVQEKLPEGVNERGLTVTGFLFLHALFIEKGRLETTWTVLRKFGYNNDIRLAEELLPSAIFKRAPDQSFELTNAAIDFLKGMYMLFDDDQDNNLRPQEIEDLFSTAPESPWKEAPYEDAAEKTALGGLSFDAFLSMWSLMTLLEPARSVENLIYIGFPGDPSTAIRVTRRRRLDRKKQQCERKVFQCFVFGPNNAGKSALLNCFLGRSYTDNQESTTDERYAVNMVDESGAKKTLIMREIPEDGVQGLFSSKESLAACDIAVFVYDSSDESSWKRATQLLVEVANYGEATGYEVPCLMVSAKDDLDSSPISIQESTRMTQDMGIEPPVSISSKLGDFNNLFRKILTAAQHPHLSIPETEAGKSRKHYNRLINRSLMAVSIGAAAVVVGLAAYRVYATRKSSSA.

At Met1–Ser619 the chain is on the cytoplasmic side. The residue at position 14 (Ser14) is a Phosphoserine. One can recognise a Miro 1 domain in the interval Pro15–His182. EF-hand domains follow at residues Arg198 to Ala233 and Ala319 to Ser354. 9 residues coordinate Ca(2+): Asp211, Asp213, Asp215, Glu222, Asp332, Asp334, Asp336, Asn338, and Glu343. Residues Arg427–His595 enclose the Miro 2 domain. Residues Leu620–Tyr640 form a helical membrane-spanning segment. The Mitochondrial intermembrane segment spans residues Ala641–Ala648.

Belongs to the mitochondrial Rho GTPase family. Expressed in roots, leaves, stems, flowers and siliques.

It is found in the mitochondrion outer membrane. In terms of biological role, mitochondrial GTPase required to maintain proper development, morphology and intracellular distribution of mitochondria, which in turn are essential for the progress of embryonic cell division, development of haploid male and female gametes, and pollen tube growth. This chain is Mitochondrial Rho GTPase 1, found in Arabidopsis thaliana (Mouse-ear cress).